The sequence spans 296 residues: Fructose-bisphosphate aldolase class 1 (296 aa).

Glu-175 (proton acceptor) is an active-site residue. The active-site Schiff-base intermediate with dihydroxyacetone-P is the Lys-212.

This sequence belongs to the class I fructose-bisphosphate aldolase family.

It catalyses the reaction beta-D-fructose 1,6-bisphosphate = D-glyceraldehyde 3-phosphate + dihydroxyacetone phosphate. It participates in carbohydrate degradation; glycolysis; D-glyceraldehyde 3-phosphate and glycerone phosphate from D-glucose: step 4/4. The polypeptide is Fructose-bisphosphate aldolase class 1 (Staphylococcus aureus (strain Mu3 / ATCC 700698)).